Here is a 199-residue protein sequence, read N- to C-terminus: NAD(P)H dehydrogenase (quinone) (199 aa).

Positions 4–190 (MLVLYYSAYG…DDARFQGRRV (187 aa)) constitute a Flavodoxin-like domain. Residues 10 to 15 (SAYGHM) and 78 to 80 (TRY) each bind FMN. Position 12 (Tyr12) interacts with NAD(+). Trp98 contacts substrate. FMN is bound by residues 113-119 (STATQHG) and His134. A disordered region spans residues 158–181 (GAPYGMTTTADGDGSRQPSAQELD). Residues 163-177 (MTTTADGDGSRQPSA) are compositionally biased toward polar residues.

This sequence belongs to the WrbA family. It depends on FMN as a cofactor.

The enzyme catalyses a quinone + NADH + H(+) = a quinol + NAD(+). The catalysed reaction is a quinone + NADPH + H(+) = a quinol + NADP(+). In Brucella ovis (strain ATCC 25840 / 63/290 / NCTC 10512), this protein is NAD(P)H dehydrogenase (quinone).